Consider the following 259-residue polypeptide: 3-deoxy-manno-octulosonate cytidylyltransferase (259 aa).

It belongs to the KdsB family.

The protein localises to the cytoplasm. The catalysed reaction is 3-deoxy-alpha-D-manno-oct-2-ulosonate + CTP = CMP-3-deoxy-beta-D-manno-octulosonate + diphosphate. It participates in nucleotide-sugar biosynthesis; CMP-3-deoxy-D-manno-octulosonate biosynthesis; CMP-3-deoxy-D-manno-octulosonate from 3-deoxy-D-manno-octulosonate and CTP: step 1/1. It functions in the pathway bacterial outer membrane biogenesis; lipopolysaccharide biosynthesis. In terms of biological role, activates KDO (a required 8-carbon sugar) for incorporation into bacterial lipopolysaccharide in Gram-negative bacteria. This is 3-deoxy-manno-octulosonate cytidylyltransferase from Actinobacillus succinogenes (strain ATCC 55618 / DSM 22257 / CCUG 43843 / 130Z).